The chain runs to 116 residues: Large ribosomal subunit protein bL20 (116 aa).

The protein belongs to the bacterial ribosomal protein bL20 family.

Its function is as follows. Binds directly to 23S ribosomal RNA and is necessary for the in vitro assembly process of the 50S ribosomal subunit. It is not involved in the protein synthesizing functions of that subunit. The protein is Large ribosomal subunit protein bL20 of Nautilia profundicola (strain ATCC BAA-1463 / DSM 18972 / AmH).